The primary structure comprises 395 residues: Imidazolonepropionase (395 aa).

Residues His72 and His74 each coordinate Fe(3+). Positions 72 and 74 each coordinate Zn(2+). 3 residues coordinate 4-imidazolone-5-propanoate: Arg81, Tyr144, and His174. Tyr144 is an N-formimidoyl-L-glutamate binding site. Fe(3+) is bound at residue His231. A Zn(2+)-binding site is contributed by His231. Glu234 is a binding site for 4-imidazolone-5-propanoate. Asp306 is a binding site for Fe(3+). Zn(2+) is bound at residue Asp306.

This sequence belongs to the metallo-dependent hydrolases superfamily. HutI family. Requires Zn(2+) as cofactor. Fe(3+) serves as cofactor.

It is found in the cytoplasm. The enzyme catalyses 4-imidazolone-5-propanoate + H2O = N-formimidoyl-L-glutamate. It functions in the pathway amino-acid degradation; L-histidine degradation into L-glutamate; N-formimidoyl-L-glutamate from L-histidine: step 3/3. In terms of biological role, catalyzes the hydrolytic cleavage of the carbon-nitrogen bond in imidazolone-5-propanoate to yield N-formimidoyl-L-glutamate. It is the third step in the universal histidine degradation pathway. In Pyrobaculum arsenaticum (strain DSM 13514 / JCM 11321 / PZ6), this protein is Imidazolonepropionase.